Consider the following 404-residue polypeptide: Glucose-1-phosphate adenylyltransferase (404 aa).

Residues Y99, G164, E179–K180, and S197 contribute to the alpha-D-glucose 1-phosphate site.

The protein belongs to the bacterial/plant glucose-1-phosphate adenylyltransferase family.

The enzyme catalyses alpha-D-glucose 1-phosphate + ATP + H(+) = ADP-alpha-D-glucose + diphosphate. It participates in capsule biogenesis; capsule polysaccharide biosynthesis. Its pathway is glycan biosynthesis; glycogen biosynthesis. Functionally, involved in the biosynthesis of ADP-glucose, a building block, required in the biosynthesis of maltose-1-phosphate (M1P) and in the elongation reactions to produce linear alpha-1,4-glucans. Catalyzes the reaction between ATP and alpha-D-glucose 1-phosphate (G1P) to produce pyrophosphate and ADP-Glc. The sequence is that of Glucose-1-phosphate adenylyltransferase from Mycobacterium marinum (strain ATCC BAA-535 / M).